Here is a 196-residue protein sequence, read N- to C-terminus: MATSVLCCLRCCRDGGTGHIPLKEMPAVQLDTQHMGTDVVIVKNGRRICGTGGCLASAPLHQNKSYFEFKIQSTGIWGIGVATQKVNLNQIPLGRDMHSLVMRNDGALYHNNEEKNRLPANSLPQEGDVVGITYDHVELNVYLNGKNMHCPASGIRGTVYPVVYVDDSAILDCQFSEFYHTPPPGFEKILFEQQIF.

Residue A2 is modified to N-acetylalanine. Residues 2–184 (ATSVLCCLRC…FSEFYHTPPP (183 aa)) enclose the B30.2/SPRY domain.

In Homo sapiens (Human), this protein is SPRY domain-containing protein 7 (SPRYD7).